The primary structure comprises 640 residues: Chitin elicitor receptor kinase 1 (640 aa).

Residues 1–31 (MKFQMKMKSELCRTYKYWLILLVLWLSGVTQ) form the signal peptide. Over 32-248 (RETGVLIVDA…GTVHWRSNVG (217 aa)) the chain is Extracellular. 3 disulfide bridges follow: Cys-43–Cys-104, Cys-49–Cys-166, and Cys-102–Cys-164. 3 LysM domains span residues 53-98 (AYYR…NIYL), 113-160 (FSYT…SLTI), and 179-227 (STYV…KAAN). Chitin contacts are provided by residues 119–125 (TNDTAEK) and 148–154 (DLSSIYS). Residues 249–269 (IIVGVVVGGIVLAVLLLFALI) traverse the membrane as a helical segment. The Cytoplasmic segment spans residues 270–640 (FGFKHFRRRK…SQPPSGNDQL (371 aa)). Positions 286–308 (MQQSGLLSSSSMAGSKPSRSGST) are disordered. Over residues 289-307 (SGLLSSSSMAGSKPSRSGS) the composition is skewed to low complexity. The region spanning 330 to 612 (FSLAKKIGQG…RFAVVQLMTL (283 aa)) is the Protein kinase domain. ATP is bound by residues 336–344 (IGQGGFASV) and Lys-357. Catalysis depends on Asp-452, which acts as the Proton acceptor.

This sequence belongs to the protein kinase superfamily. Ser/Thr protein kinase family.

The protein resides in the cell membrane. It carries out the reaction L-seryl-[protein] + ATP = O-phospho-L-seryl-[protein] + ADP + H(+). The catalysed reaction is L-threonyl-[protein] + ATP = O-phospho-L-threonyl-[protein] + ADP + H(+). Lysin motif (LysM) receptor kinase required as a cell surface receptor for chitin elicitor (chitooligosaccharides) signaling leading to innate immunity in response to biotic stresses. The CERK1, MEKK1a/b, MKK1a/b/c and MPK4a/b proteins are involved in pathogen defense. The pathway induces rapid growth inhibition, cell wall depositions and accumulation of defense-related transcripts. This protein is required for response to chitin. Is able to complement the A.thaliana cerk1 mutant. The protein is Chitin elicitor receptor kinase 1 of Physcomitrium patens (Spreading-leaved earth moss).